Consider the following 232-residue polypeptide: Large ribosomal subunit protein uL1 (232 aa).

This sequence belongs to the universal ribosomal protein uL1 family. In terms of assembly, part of the 50S ribosomal subunit.

Its function is as follows. Binds directly to 23S rRNA. The L1 stalk is quite mobile in the ribosome, and is involved in E site tRNA release. In terms of biological role, protein L1 is also a translational repressor protein, it controls the translation of the L11 operon by binding to its mRNA. This Burkholderia vietnamiensis (strain G4 / LMG 22486) (Burkholderia cepacia (strain R1808)) protein is Large ribosomal subunit protein uL1.